The chain runs to 76 residues: uncharacterized protein (76 aa).

The N-terminal stretch at 1–22 (MFTKALSVVLLTCALFSGQLMA) is a signal peptide.

This is an uncharacterized protein from Escherichia coli O157:H7.